We begin with the raw amino-acid sequence, 554 residues long: DNA ligase (554 aa).

Residue glutamate 253 coordinates ATP. The N6-AMP-lysine intermediate role is filled by lysine 255. ATP contacts are provided by arginine 260, arginine 275, glutamate 304, phenylalanine 344, arginine 418, and lysine 424.

This sequence belongs to the ATP-dependent DNA ligase family. Mg(2+) is required as a cofactor.

It catalyses the reaction ATP + (deoxyribonucleotide)n-3'-hydroxyl + 5'-phospho-(deoxyribonucleotide)m = (deoxyribonucleotide)n+m + AMP + diphosphate.. Its function is as follows. DNA ligase that seals nicks in double-stranded DNA during DNA replication, DNA recombination and DNA repair. This Haloarcula marismortui (strain ATCC 43049 / DSM 3752 / JCM 8966 / VKM B-1809) (Halobacterium marismortui) protein is DNA ligase.